A 418-amino-acid chain; its full sequence is Putative competence-damage inducible protein (418 aa).

This sequence belongs to the CinA family.

The chain is Putative competence-damage inducible protein from Clostridioides difficile (strain 630) (Peptoclostridium difficile).